Consider the following 134-residue polypeptide: Ribosome-binding factor A (134 aa).

Residues 115–134 (EDQRQERGEIPPGSDELQPD) form a disordered region.

The protein belongs to the RbfA family. As to quaternary structure, monomer. Binds 30S ribosomal subunits, but not 50S ribosomal subunits or 70S ribosomes.

The protein localises to the cytoplasm. Its function is as follows. One of several proteins that assist in the late maturation steps of the functional core of the 30S ribosomal subunit. Associates with free 30S ribosomal subunits (but not with 30S subunits that are part of 70S ribosomes or polysomes). Required for efficient processing of 16S rRNA. May interact with the 5'-terminal helix region of 16S rRNA. This chain is Ribosome-binding factor A, found in Synechococcus sp. (strain CC9902).